Here is a 108-residue protein sequence, read N- to C-terminus: Trissin (108 aa).

The N-terminal stretch at 1–29 (MTKTTMHWLAHFQIILLCIWLMCPPSSQA) is a signal peptide. Disulfide bonds link Cys32/Cys43, Cys35/Cys52, and Cys39/Cys51. Positions 57–108 (RKRSDPDALRQSSNRRLIDFILLQGRALFTQELRERRHNGTLMDLGLNTYYP) are excised as a propeptide.

The protein resides in the secreted. In terms of biological role, activates the G-protein coupled receptor TrissinR in vitro, leading to increased intracellular calcium ion levels. This Drosophila melanogaster (Fruit fly) protein is Trissin.